Consider the following 66-residue polypeptide: Small ribosomal subunit protein eS30 (66 aa).

The disordered stretch occupies residues 1–35; it reads MGKVHGGLNRAGKVRNATPKKDKEEKRKPKVGRAK.

This sequence belongs to the eukaryotic ribosomal protein eS30 family.

The chain is Small ribosomal subunit protein eS30 (rps30-1) from Dictyostelium discoideum (Social amoeba).